We begin with the raw amino-acid sequence, 197 residues long: MVPPITSDEFCETSGCFGDSANLHTTLERLKININSDAKKLVDTNGDLKKHQRFLRIAKVTSLRSKDPNTQVGCVIVDKDNCIVSVGYNGFPIGVDDDVFRWDKEDPEDNKHLYVVHAEMNAIINKRCTTLHDCTVYVTLFPCNKCAQMLIQSRVKKVYFLENRDELAFRASKKMLDHARLPYEQIVMPQEAYVIEL.

Positions 49-183 (KKHQRFLRIA…KMLDHARLPY (135 aa)) constitute a CMP/dCMP-type deaminase domain. H117 lines the Zn(2+) pocket. The active-site Proton donor is E119. Zn(2+) contacts are provided by C143 and C146.

It belongs to the cytidine and deoxycytidylate deaminase family. Zn(2+) is required as a cofactor.

It carries out the reaction dCMP + H2O + H(+) = dUMP + NH4(+). Its function is as follows. Supplies the nucleotide substrate for thymidylate synthetase. This Caenorhabditis elegans protein is Probable deoxycytidylate deaminase.